The chain runs to 352 residues: Phenylalanine--tRNA ligase alpha subunit (352 aa).

E258 provides a ligand contact to Mg(2+).

This sequence belongs to the class-II aminoacyl-tRNA synthetase family. Phe-tRNA synthetase alpha subunit type 1 subfamily. Tetramer of two alpha and two beta subunits. Mg(2+) is required as a cofactor.

The protein resides in the cytoplasm. The catalysed reaction is tRNA(Phe) + L-phenylalanine + ATP = L-phenylalanyl-tRNA(Phe) + AMP + diphosphate + H(+). This Staphylococcus epidermidis (strain ATCC 35984 / DSM 28319 / BCRC 17069 / CCUG 31568 / BM 3577 / RP62A) protein is Phenylalanine--tRNA ligase alpha subunit.